The following is a 358-amino-acid chain: DnaJ homolog subfamily C member 18 (358 aa).

A J domain is found at 82–146 (NYYEILGVSR…DKRLRYDEYG (65 aa)). Residues 228 to 248 (AFIQLLPVLVIVIISVITQLL) form a helical membrane-spanning segment.

It is found in the endoplasmic reticulum membrane. The chain is DnaJ homolog subfamily C member 18 (DNAJC18) from Macaca fascicularis (Crab-eating macaque).